The primary structure comprises 2555 residues: Plipastatin synthase subunit C (2555 aa).

The tract at residues 7-306 is condensation 1; sequence IQDIYPLSFM…NTIPIRAQSD (300 aa). The segment at 491-894 is adenylation 1; sequence TYAELDMYAS…SIEGVREAAV (404 aa). Residues 967–1042 form the Carrier 1 domain; sequence APRNVTEMKL…GLATVIREGT (76 aa). Serine 1002 carries the O-(pantetheine 4'-phosphoryl)serine modification. The interval 1054–1344 is condensation 2; the sequence is KQETYPVSSA…NTLALRTRPE (291 aa). The tract at residues 1532 to 1927 is adenylation 2; sequence TYEDLNSWAN…QIDGVKEAAV (396 aa). In terms of domain architecture, Carrier 2 spans 2003–2077; the sequence is PPRNELEEQL…DLSPFIRKSE (75 aa). Serine 2038 is modified (O-(pantetheine 4'-phosphoryl)serine). The epimerization 3 stretch occupies residues 2085 to 2548; that stretch reads IQGDVPWTPV…SLTAEDLDSI (464 aa).

Belongs to the ATP-dependent AMP-binding enzyme family. Pantetheine 4'-phosphate is required as a cofactor.

In terms of biological role, this protein is a multifunctional enzyme, able to activate and polymerize the amino acids Glu and Ala/Val as part of the biosynthesis of the lipopeptide antibiotic plipastatin. The Ala/Val residue is further epimerized to the D-isomer form. The activation sites for these amino acids consist of individual domains. This Bacillus subtilis (strain 168) protein is Plipastatin synthase subunit C (ppsC).